Reading from the N-terminus, the 258-residue chain is Imidazole glycerol phosphate synthase subunit HisF (258 aa).

Residues D11 and D130 contribute to the active site.

Belongs to the HisA/HisF family. In terms of assembly, heterodimer of HisH and HisF.

It localises to the cytoplasm. The enzyme catalyses 5-[(5-phospho-1-deoxy-D-ribulos-1-ylimino)methylamino]-1-(5-phospho-beta-D-ribosyl)imidazole-4-carboxamide + L-glutamine = D-erythro-1-(imidazol-4-yl)glycerol 3-phosphate + 5-amino-1-(5-phospho-beta-D-ribosyl)imidazole-4-carboxamide + L-glutamate + H(+). It participates in amino-acid biosynthesis; L-histidine biosynthesis; L-histidine from 5-phospho-alpha-D-ribose 1-diphosphate: step 5/9. IGPS catalyzes the conversion of PRFAR and glutamine to IGP, AICAR and glutamate. The HisF subunit catalyzes the cyclization activity that produces IGP and AICAR from PRFAR using the ammonia provided by the HisH subunit. In Escherichia coli (strain ATCC 8739 / DSM 1576 / NBRC 3972 / NCIMB 8545 / WDCM 00012 / Crooks), this protein is Imidazole glycerol phosphate synthase subunit HisF.